Here is a 334-residue protein sequence, read N- to C-terminus: Ribonucleoside-diphosphate reductase small chain (334 aa).

The Fe cation site is built by aspartate 77, glutamate 108, and histidine 111. The active site involves tyrosine 115. Residues glutamate 171, glutamate 205, and histidine 208 each coordinate Fe cation.

This sequence belongs to the ribonucleoside diphosphate reductase small chain family. As to quaternary structure, heterotetramer composed of a homodimer of the large subunit (R1) and a homodimer of the small subunit (R2). Larger multisubunit protein complex are also active, composed of (R1)n(R2)n. Requires Fe cation as cofactor.

The catalysed reaction is a 2'-deoxyribonucleoside 5'-diphosphate + [thioredoxin]-disulfide + H2O = a ribonucleoside 5'-diphosphate + [thioredoxin]-dithiol. Functionally, ribonucleoside-diphosphate reductase holoenzyme provides the precursors necessary for viral DNA synthesis. Allows virus growth in non-dividing cells. Catalyzes the biosynthesis of deoxyribonucleotides from the corresponding ribonucleotides. This chain is Ribonucleoside-diphosphate reductase small chain, found in Ornithodoros (relapsing fever ticks).